Reading from the N-terminus, the 1159-residue chain is ATP-dependent helicase/deoxyribonuclease subunit B (1159 aa).

8–15 (GRAGSGKT) contacts ATP. [4Fe-4S] cluster contacts are provided by Cys-784, Cys-1102, Cys-1105, and Cys-1111. The interval 1140-1159 (VKEDGSQVDGRTEGSDNNEG) is disordered.

This sequence belongs to the helicase family. AddB/RexB type 1 subfamily. In terms of assembly, heterodimer of AddA and AddB. Mg(2+) is required as a cofactor. The cofactor is [4Fe-4S] cluster.

The heterodimer acts as both an ATP-dependent DNA helicase and an ATP-dependent, dual-direction single-stranded exonuclease. Recognizes the chi site generating a DNA molecule suitable for the initiation of homologous recombination. The AddB subunit has 5' -&gt; 3' nuclease activity but not helicase activity. The sequence is that of ATP-dependent helicase/deoxyribonuclease subunit B from Caldanaerobacter subterraneus subsp. tengcongensis (strain DSM 15242 / JCM 11007 / NBRC 100824 / MB4) (Thermoanaerobacter tengcongensis).